Reading from the N-terminus, the 341-residue chain is DNA-directed RNA polymerase subunit alpha (341 aa).

The tract at residues 1–237 (MLSLSKNWNA…EQLQLFISFE (237 aa)) is alpha N-terminal domain (alpha-NTD). Positions 247-341 (TDALPFSPYL…LSKRYEDSYN (95 aa)) are alpha C-terminal domain (alpha-CTD).

It belongs to the RNA polymerase alpha chain family. Homodimer. The RNAP catalytic core consists of 2 alpha, 1 beta, 1 beta' and 1 omega subunit. When a sigma factor is associated with the core the holoenzyme is formed, which can initiate transcription.

It carries out the reaction RNA(n) + a ribonucleoside 5'-triphosphate = RNA(n+1) + diphosphate. Its function is as follows. DNA-dependent RNA polymerase catalyzes the transcription of DNA into RNA using the four ribonucleoside triphosphates as substrates. The polypeptide is DNA-directed RNA polymerase subunit alpha (Rickettsia bellii (strain RML369-C)).